Consider the following 258-residue polypeptide: Aspartate/glutamate leucyltransferase (258 aa).

The protein belongs to the R-transferase family. Bpt subfamily.

The protein localises to the cytoplasm. The enzyme catalyses N-terminal L-glutamyl-[protein] + L-leucyl-tRNA(Leu) = N-terminal L-leucyl-L-glutamyl-[protein] + tRNA(Leu) + H(+). It catalyses the reaction N-terminal L-aspartyl-[protein] + L-leucyl-tRNA(Leu) = N-terminal L-leucyl-L-aspartyl-[protein] + tRNA(Leu) + H(+). Functions in the N-end rule pathway of protein degradation where it conjugates Leu from its aminoacyl-tRNA to the N-termini of proteins containing an N-terminal aspartate or glutamate. The chain is Aspartate/glutamate leucyltransferase from Bradyrhizobium sp. (strain BTAi1 / ATCC BAA-1182).